The following is a 159-amino-acid chain: Acetolactate synthase small subunit (159 aa).

The region spanning 5-79 is the ACT domain; sequence ILSILLENES…DVLKVTEIED (75 aa).

Belongs to the acetolactate synthase small subunit family. In terms of assembly, dimer of large and small chains.

It carries out the reaction 2 pyruvate + H(+) = (2S)-2-acetolactate + CO2. It functions in the pathway amino-acid biosynthesis; L-isoleucine biosynthesis; L-isoleucine from 2-oxobutanoate: step 1/4. It participates in amino-acid biosynthesis; L-valine biosynthesis; L-valine from pyruvate: step 1/4. The polypeptide is Acetolactate synthase small subunit (ilvH) (Buchnera aphidicola subsp. Baizongia pistaciae (strain Bp)).